Here is a 2053-residue protein sequence, read N- to C-terminus: Nonribosomal peptide synthetase pboA (2053 aa).

An adenylation 1 region spans residues 16–402; sequence ACRDNADRPA…GRRDRVAKVR (387 aa). A Carrier 1 domain is found at 503–579; it reads RSYASVDEVI…HLITVCRERR (77 aa). Ser540 bears the O-(pantetheine 4'-phosphoryl)serine mark. The condensation 1 stretch occupies residues 611–896; that stretch reads NDPSLYCVKH…LLQSVHRTVQ (286 aa). Residues 1034 to 1418 are adenylation 2; the sequence is SAAARNPTNI…GRRDRQVKLR (385 aa). Residues 1515 to 1593 form the Carrier 2 domain; sequence VPDTSVKKII…DIVALVEGKI (79 aa). The residue at position 1553 (Ser1553) is an O-(pantetheine 4'-phosphoryl)serine. The condensation 2 stretch occupies residues 1630–1981; it reads NSQCQSGFNV…LQLRLEYDSD (352 aa).

The protein belongs to the NRP synthetase family. Requires pantetheine 4'-phosphate as cofactor.

It functions in the pathway secondary metabolite biosynthesis. Its function is as follows. Nonribosomal peptide synthetase; part of the gene cluster that mediates the biosynthesis of protubonine B, a hydroxylated and diacetylated cyclo-L-Trp-L-Leu derivative. The first step of the protubonine B synthesis is performed by the nonribosomal peptide synthetase pboA that catalyzes the formation of cyclo-L-Trp-L-Leu by condensing L-Leu with L-Trp. The flavin-dependent monooxygenase pboD is responsible for hydroxylation at C-3 of the indole ring and subsequent formation of the pyrrolidine ring, leadind to protubonine D. Protubonine D is further diacetylated by two acetyltransferases, pboB and pboC, to form the final product protubonine B via protubonine C. This Aspergillus ustus protein is Nonribosomal peptide synthetase pboA.